The following is a 315-amino-acid chain: Glycine--tRNA ligase alpha subunit (315 aa).

This sequence belongs to the class-II aminoacyl-tRNA synthetase family. In terms of assembly, tetramer of two alpha and two beta subunits.

Its subcellular location is the cytoplasm. It catalyses the reaction tRNA(Gly) + glycine + ATP = glycyl-tRNA(Gly) + AMP + diphosphate. The sequence is that of Glycine--tRNA ligase alpha subunit from Pseudomonas putida (strain W619).